The following is a 505-amino-acid chain: Glycerol kinase (505 aa).

ADP is bound at residue Thr-14. 3 residues coordinate ATP: Thr-14, Thr-15, and Ser-16. Thr-14 is a sn-glycerol 3-phosphate binding site. Arg-18 contacts ADP. Sn-glycerol 3-phosphate is bound by residues Arg-84, Glu-85, Tyr-136, and Asp-246. Residues Arg-84, Glu-85, Tyr-136, Asp-246, and Gln-247 each coordinate glycerol. ADP is bound by residues Thr-268 and Gly-311. ATP contacts are provided by Thr-268, Gly-311, Gln-315, and Gly-412. ADP-binding residues include Gly-412 and Asn-416.

Belongs to the FGGY kinase family.

The enzyme catalyses glycerol + ATP = sn-glycerol 3-phosphate + ADP + H(+). Its pathway is polyol metabolism; glycerol degradation via glycerol kinase pathway; sn-glycerol 3-phosphate from glycerol: step 1/1. Its activity is regulated as follows. Inhibited by fructose 1,6-bisphosphate (FBP). Its function is as follows. Key enzyme in the regulation of glycerol uptake and metabolism. Catalyzes the phosphorylation of glycerol to yield sn-glycerol 3-phosphate. The protein is Glycerol kinase of Vibrio vulnificus (strain CMCP6).